We begin with the raw amino-acid sequence, 1812 residues long: Breast cancer type 1 susceptibility protein homolog (1812 aa).

An N-acetylmethionine modification is found at M1. The segment at 24–65 (CPICLELIKEPVSTKCDHIFCKFCMLKLLNQKKGPSQCPLCK) adopts an RING-type zinc-finger fold. A Glycyl lysine isopeptide (Lys-Gly) (interchain with G-Cter in SUMO2) cross-link involves residue K109. Phosphoserine is present on S114. The segment covering 165-176 (KKNRQTQPRKKS) has biased composition (basic residues). Positions 165 to 198 (KKNRQTQPRKKSVYIELDSDSSEETVTKPGDCSV) are disordered. Residue K298 forms a Glycyl lysine isopeptide (Lys-Gly) (interchain with G-Cter in SUMO2) linkage. Residues 321 to 332 (SKGTCNDRQVPS) show a composition bias toward polar residues. The interval 321–362 (SKGTCNDRQVPSTGEKVGPNADSLSDREKWTHPQSLCPENSG) is disordered. Residue K336 forms a Glycyl lysine isopeptide (Lys-Gly) (interchain with G-Cter in SUMO2) linkage. The segment covering 352-362 (HPQSLCPENSG) has biased composition (polar residues). S392 carries the post-translational modification Phosphoserine. Glycyl lysine isopeptide (Lys-Gly) (interchain with G-Cter in SUMO2) cross-links involve residues K440, K456, and K512. Disordered stretches follow at residues 492-581 (PFTN…AKSI) and 640-767 (SEET…VSDT). Polar residues predominate over residues 538-556 (QAVSTTSNCQENKIAGSNL). Basic and acidic residues-rich tracts occupy residues 557 to 572 (QKEK…RKEP) and 669 to 679 (ADAKKNEPNEH). S686, S706, and S717 each carry phosphoserine. Polar residues-rich tracts occupy residues 702–733 (TSCS…QMSD) and 758–767 (STSVSLVSDT). Residue S831 is modified to Phosphoserine. Disordered regions lie at residues 864 to 899 (KPRS…GQEE), 947 to 995 (GLSA…STEM), 1030 to 1056 (VCST…PPLD), 1147 to 1185 (RESS…EDED), and 1205 to 1230 (CSSA…SSSD). A compositionally biased stretch (polar residues) spans 947-972 (GLSATGKSGISQNSHFKQSVSPIRSS). A Phosphoserine; by CHEK2 modification is found at S971. The segment covering 973-991 (IKTDNRKPLTEGRFERHTS) has biased composition (basic and acidic residues). S992 carries the phosphoserine modification. A Glycyl lysine isopeptide (Lys-Gly) (interchain with G-Cter in SUMO2) cross-link involves residue K1048. Over residues 1151 to 1166 (RSPSPVTHASKSQSLH) the composition is skewed to polar residues. Phosphoserine occurs at positions 1152, 1154, 1174, and 1180. Positions 1175-1185 (SEESDSTEDED) are enriched in acidic residues. The residue at position 1241 (S1241) is a Phosphoserine. The tract at residues 1244-1289 (HQFSEDPRCSGSMFSSQHSAAQGSTANANSQDSNFIPPSKQRSHQC) is disordered. Positions 1255 to 1279 (SMFSSQHSAAQGSTANANSQDSNFI) are enriched in polar residues. A phosphoserine mark is found at S1297 and S1303. The segment covering 1313 to 1323 (EEDNDQEEDSI) has biased composition (acidic residues). Residues 1313-1343 (EEDNDQEEDSIIPDSEASGYESETNLSEDCS) are disordered. Positions 1333-1343 (ESETNLSEDCS) are enriched in polar residues. S1343 carries the post-translational modification Phosphoserine. Residue T1350 is modified to Phosphothreonine. An interaction with PALB2 region spans residues 1353–1380 (RATMKYNLIKLQQEMAHLEAVLEQRGNQ). S1413, S1481, and S1495 each carry phosphoserine. A disordered region spans residues 1437-1547 (HLEGPTSGDD…AHIGTTPAST (111 aa)). A compositionally biased stretch (polar residues) spans 1492–1504 (EASSEPHNSTGQS). Positions 1527–1538 (RDPESESPKEPA) are enriched in basic and acidic residues. BRCT domains are found at residues 1585–1679 (SEER…EFEV) and 1698–1797 (SREK…AYLV).

In terms of assembly, heterodimer with BARD1. Part of the BRCA1-associated genome surveillance complex (BASC), which contains BRCA1, MSH2, MSH6, MLH1, ATM, BLM, PMS2 and the MRE11-RAD50-NBN protein (MRN) complex. This association could be a dynamic process changing throughout the cell cycle and within subnuclear domains. Component of the BRCA1-A complex, at least composed of BRCA1, BARD1, UIMC1/RAP80, ABRAXAS1, BRCC3/BRCC36, BABAM2 and BABAM1/NBA1. Interacts (via the BRCT domains) with ABRAXAS1 (phosphorylated form); this is important for recruitment to sites of DNA damage. Can form a heterotetramer with two molecules of ABRAXAS1 (phosphorylated form). Component of the BRCA1-RBBP8 complex. Interacts (via the BRCT domains) with RBBP8 ('Ser-327' phosphorylated form); the interaction ubiquitinates RBBP8, regulates CHEK1 activation, and involves RBBP8 in BRCA1-dependent G2/M checkpoint control on DNA damage. Associates with RNA polymerase II holoenzyme. Interacts with SMC1A, NELFB, DCLRE1C, CLSPN. CHEK1, CHEK2, BAP1, BRCC3, UBXN1 and PCLAF. Interacts (via BRCT domains) with BRIP1 (phosphorylated form). Interacts with FANCD2 (ubiquitinated form). Interacts with H2AX (phosphorylated on 'Ser-140'). Interacts (via the BRCT domains) with ACACA (phosphorylated form); the interaction prevents dephosphorylation of ACACA. Part of a BRCA complex containing BRCA1, BRCA2 and PALB2. Interacts directly with PALB2; the interaction is essential for its function in HRR. Interacts directly with BRCA2; the interaction occurs only in the presence of PALB2 which serves as the bridging protein. Interacts (via the BRCT domains) with LMO4; the interaction represses the transcriptional activity of BRCA1. Interacts (via the BRCT domains) with CCAR2 (via N-terminus); the interaction represses the transcriptional activator activity of BRCA1. Interacts with EXD2. Interacts (via C-terminus) with DHX9; this interaction is direct and links BRCA1 to the RNA polymerase II holoenzyme. Interacts with DNA helicase ZGRF1; the interaction is increased following DNA damage induction. Phosphorylated in response to IR, UV, and various stimuli that cause checkpoint activation, probably by ATM or ATR. Phosphorylation at Ser-971 by CHEK2 regulates mitotic spindle assembly. Phosphorylation by AURKA regulates centrosomal microtubule nucleation. Post-translationally, autoubiquitinated, undergoes 'Lys-6'-linked polyubiquitination. 'Lys-6'-linked polyubiquitination does not promote degradation. As to expression, in the embryo, expressed in otic vesicles at day 9.5. At day 10.5, this expression decreases and high levels are found in the neuroectoderm. At days 11-12.5, high levels in differentiating keratinocytes and whisker pad primordia. At days 14-17, expression also observed in kidney epithelial cells. In the adult, highest levels found in spleen, thymus, lymph nodes, epithelial organs, and alveolar and ductal epithelial cells of the mammary gland. Very low levels in brain, kidney, and skin. No expression in heart, liver or lung.

It is found in the nucleus. Its subcellular location is the chromosome. It localises to the cytoplasm. The catalysed reaction is S-ubiquitinyl-[E2 ubiquitin-conjugating enzyme]-L-cysteine + [acceptor protein]-L-lysine = [E2 ubiquitin-conjugating enzyme]-L-cysteine + N(6)-ubiquitinyl-[acceptor protein]-L-lysine.. It functions in the pathway protein modification; protein ubiquitination. In terms of biological role, E3 ubiquitin-protein ligase that specifically mediates the formation of 'Lys-6'-linked polyubiquitin chains and plays a central role in DNA repair by facilitating cellular responses to DNA damage. It is unclear whether it also mediates the formation of other types of polyubiquitin chains. The BRCA1-BARD1 heterodimer coordinates a diverse range of cellular pathways such as DNA damage repair, ubiquitination and transcriptional regulation to maintain genomic stability. Regulates centrosomal microtubule nucleation. Required for appropriate cell cycle arrests after ionizing irradiation in both the S-phase and the G2 phase of the cell cycle. Required for FANCD2 targeting to sites of DNA damage. Inhibits lipid synthesis by binding to inactive phosphorylated ACACA and preventing its dephosphorylation. Contributes to homologous recombination repair (HRR) via its direct interaction with PALB2, fine-tunes recombinational repair partly through its modulatory role in the PALB2-dependent loading of BRCA2-RAD51 repair machinery at DNA breaks. Component of the BRCA1-RBBP8 complex which regulates CHEK1 activation and controls cell cycle G2/M checkpoints on DNA damage via BRCA1-mediated ubiquitination of RBBP8. Acts as a transcriptional activator. In Mus musculus (Mouse), this protein is Breast cancer type 1 susceptibility protein homolog (Brca1).